Here is a 970-residue protein sequence, read N- to C-terminus: Probable histidine kinase 6 (970 aa).

The Cytoplasmic portion of the chain corresponds to 1–12 (MGKPEARSGWRN). Residues 13 to 33 (AAAAAWVLVAVACAAYMHWHL) traverse the membrane as a helical segment. Topologically, residues 34-306 (RRETMDRAEE…YRQKPPLPWS (273 aa)) are extracellular. The 213-residue stretch at 82 to 294 (FPSAIDQDTF…GDPFRAHEMR (213 aa)) folds into the CHASE domain. A helical transmembrane segment spans residues 307–327 (AITNPLGTFVIWMLVGYIICA). Residues 328 to 970 (AWSRYDKVSE…LVVGTKESAV (643 aa)) lie on the Cytoplasmic side of the membrane. Residues 362–651 (TVSHEIRTPM…TFTFSAVLKR (290 aa)) enclose the Histidine kinase domain. Position 365 is a phosphohistidine; by autocatalysis (histidine 365). 2 consecutive Response regulatory domains span residues 676-802 (KAIL…QQLL) and 827-962 (NILI…SRLV). Position 877 is a 4-aspartylphosphate (aspartate 877).

In terms of processing, activation probably requires a transfer of a phosphate group between a His in the transmitter domain and an Asp of the receiver domain. As to expression, highly expressed in spikelets and at lower levels in roots, young leaves, mature leaves and stems.

The protein localises to the cell membrane. The enzyme catalyses ATP + protein L-histidine = ADP + protein N-phospho-L-histidine.. Cytokinin receptor related to bacterial two-component regulators. Functions as a histidine kinase and transmits the stress signal to a downstream MAPK cascade. The polypeptide is Probable histidine kinase 6 (Oryza sativa subsp. japonica (Rice)).